Here is a 59-residue protein sequence, read N- to C-terminus: MAKAKKKGATLFKVVSTEGTGFFYLVCRNLKNKQEKYSFRKYDPVVRKHVLFKEAKLNK.

It belongs to the bacterial ribosomal protein bL33 family.

The chain is Large ribosomal subunit protein bL33 from Neorickettsia sennetsu (strain ATCC VR-367 / Miyayama) (Ehrlichia sennetsu).